A 244-amino-acid chain; its full sequence is Adenosylcobinamide-GDP ribazoletransferase (244 aa).

5 helical membrane-spanning segments follow: residues leucine 31–leucine 51, alanine 55–leucine 75, isoleucine 109–valine 129, glycine 134–glycine 154, and valine 188–tryptophan 208.

Belongs to the CobS family. It depends on Mg(2+) as a cofactor.

The protein localises to the cell inner membrane. It carries out the reaction alpha-ribazole + adenosylcob(III)inamide-GDP = adenosylcob(III)alamin + GMP + H(+). The catalysed reaction is alpha-ribazole 5'-phosphate + adenosylcob(III)inamide-GDP = adenosylcob(III)alamin 5'-phosphate + GMP + H(+). The protein operates within cofactor biosynthesis; adenosylcobalamin biosynthesis; adenosylcobalamin from cob(II)yrinate a,c-diamide: step 7/7. Functionally, joins adenosylcobinamide-GDP and alpha-ribazole to generate adenosylcobalamin (Ado-cobalamin). Also synthesizes adenosylcobalamin 5'-phosphate from adenosylcobinamide-GDP and alpha-ribazole 5'-phosphate. The protein is Adenosylcobinamide-GDP ribazoletransferase of Pseudomonas entomophila (strain L48).